The chain runs to 394 residues: NAD(P)H-quinone oxidoreductase subunit H (394 aa).

Belongs to the complex I 49 kDa subunit family. NDH-1 can be composed of about 15 different subunits; different subcomplexes with different compositions have been identified which probably have different functions.

The protein localises to the cellular thylakoid membrane. The enzyme catalyses a plastoquinone + NADH + (n+1) H(+)(in) = a plastoquinol + NAD(+) + n H(+)(out). It carries out the reaction a plastoquinone + NADPH + (n+1) H(+)(in) = a plastoquinol + NADP(+) + n H(+)(out). In terms of biological role, NDH-1 shuttles electrons from an unknown electron donor, via FMN and iron-sulfur (Fe-S) centers, to quinones in the respiratory and/or the photosynthetic chain. The immediate electron acceptor for the enzyme in this species is believed to be plastoquinone. Couples the redox reaction to proton translocation, and thus conserves the redox energy in a proton gradient. Cyanobacterial NDH-1 also plays a role in inorganic carbon-concentration. The sequence is that of NAD(P)H-quinone oxidoreductase subunit H from Synechococcus sp. (strain ATCC 27144 / PCC 6301 / SAUG 1402/1) (Anacystis nidulans).